A 678-amino-acid polypeptide reads, in one-letter code: DNA gyrase subunit B (678 aa).

Residues S456–P570 form the Toprim domain. Positions 462, 535, and 537 each coordinate Mg(2+).

It belongs to the type II topoisomerase GyrB family. Heterotetramer, composed of two GyrA and two GyrB chains. In the heterotetramer, GyrA contains the active site tyrosine that forms a transient covalent intermediate with the DNA, while GyrB binds cofactors catalyzes ATP hydrolysis. Requires Mg(2+) as cofactor. It depends on Mn(2+) as a cofactor. The cofactor is Ca(2+).

It is found in the cytoplasm. It catalyses the reaction ATP-dependent breakage, passage and rejoining of double-stranded DNA.. With respect to regulation, DNA supercoiling is inhibited by fluoroquinolones; IC(50) 1 ug/ml for sitafloxacin. Functionally, a type II topoisomerase that negatively supercoils closed circular double-stranded (ds) DNA in an ATP-dependent manner to modulate DNA topology and maintain chromosomes in an underwound state. Negative supercoiling favors strand separation, and DNA replication, transcription, recombination and repair, all of which involve strand separation. Also able to catalyze the interconversion of other topological isomers of dsDNA rings, including catenanes and knotted rings. Type II topoisomerases break and join 2 DNA strands simultaneously in an ATP-dependent manner. The polypeptide is DNA gyrase subunit B (Mycobacterium leprae (strain TN)).